A 62-amino-acid chain; its full sequence is Photosystem II reaction center protein K (62 aa).

A propeptide spanning residues 1–25 is cleaved from the precursor; that stretch reads MPNILSLTCICFNSVLYPTTSFFFA. A helical transmembrane segment spans residues 33 to 53; sequence IFNPIVDVMPVIPLFFFLLAF.

It belongs to the PsbK family. PSII is composed of 1 copy each of membrane proteins PsbA, PsbB, PsbC, PsbD, PsbE, PsbF, PsbH, PsbI, PsbJ, PsbK, PsbL, PsbM, PsbT, PsbX, PsbY, PsbZ, Psb30/Ycf12, at least 3 peripheral proteins of the oxygen-evolving complex and a large number of cofactors. It forms dimeric complexes.

Its subcellular location is the plastid. It is found in the chloroplast thylakoid membrane. Its function is as follows. One of the components of the core complex of photosystem II (PSII). PSII is a light-driven water:plastoquinone oxidoreductase that uses light energy to abstract electrons from H(2)O, generating O(2) and a proton gradient subsequently used for ATP formation. It consists of a core antenna complex that captures photons, and an electron transfer chain that converts photonic excitation into a charge separation. The chain is Photosystem II reaction center protein K from Agrostis stolonifera (Creeping bentgrass).